Reading from the N-terminus, the 117-residue chain is Large ribosomal subunit protein uL18 (117 aa).

This sequence belongs to the universal ribosomal protein uL18 family. In terms of assembly, part of the 50S ribosomal subunit; part of the 5S rRNA/L5/L18/L25 subcomplex. Contacts the 5S and 23S rRNAs.

Its function is as follows. This is one of the proteins that bind and probably mediate the attachment of the 5S RNA into the large ribosomal subunit, where it forms part of the central protuberance. The polypeptide is Large ribosomal subunit protein uL18 (Methylobacillus flagellatus (strain ATCC 51484 / DSM 6875 / VKM B-1610 / KT)).